We begin with the raw amino-acid sequence, 312 residues long: DDRGK domain-containing protein 1 (312 aa).

Over 1-2 the chain is Lumenal; the sequence is ME. A helical transmembrane segment spans residues 3–23; that stretch reads LIILVGIAIALLVVIITLYLL. The Cytoplasmic portion of the chain corresponds to 24–312; sequence QKKNAAPETK…ISAGGEEASS (289 aa). Residues 30-163 form a disordered region; that stretch reads PETKPAAAPQ…KQQEDLEAEV (134 aa). The span at 52-85 shows a compositional bias: low complexity; it reads RRAQIARNQRNRLRQNAPAAPAGQVAPAAGAPAA. Over residues 90 to 99 the composition is skewed to acidic residues; that stretch reads DHEDEGQVDA. Residues 110 to 163 show a composition bias toward basic and acidic residues; the sequence is LDEKMGAKKRAKMEAKEQKRLQREQELHDREQRKVKEAKEEAERKQQEDLEAEV.

The protein belongs to the DDRGK1 family. As to quaternary structure, interacts with Atg9; the interaction is transient.

The protein resides in the endoplasmic reticulum membrane. Substrate adapter for ufmylation, the covalent attachment of the ubiquitin-like modifier UFM1 to substrate proteins. Required for ufmylation of Atg9; protects the nervous system during aging, possibly by stabilizing Atg9 and supporting its function. The chain is DDRGK domain-containing protein 1 from Drosophila erecta (Fruit fly).